We begin with the raw amino-acid sequence, 32 residues long: Photosystem II reaction center protein T (32 aa).

A helical membrane pass occupies residues 3 to 23 (ALVYTFLLIGTLMVIFFAVFF).

Belongs to the PsbT family. As to quaternary structure, PSII is composed of 1 copy each of membrane proteins PsbA, PsbB, PsbC, PsbD, PsbE, PsbF, PsbH, PsbI, PsbJ, PsbK, PsbL, PsbM, PsbT, PsbX, PsbY, PsbZ, Psb30/Ycf12, at least 3 peripheral proteins of the oxygen-evolving complex and a large number of cofactors. It forms dimeric complexes.

The protein resides in the plastid. The protein localises to the chloroplast thylakoid membrane. Found at the monomer-monomer interface of the photosystem II (PS II) dimer, plays a role in assembly and dimerization of PSII. PSII is a light-driven water plastoquinone oxidoreductase, using light energy to abstract electrons from H(2)O, generating a proton gradient subsequently used for ATP formation. This Thalassiosira pseudonana (Marine diatom) protein is Photosystem II reaction center protein T.